Here is a 481-residue protein sequence, read N- to C-terminus: RAC-alpha serine/threonine-protein kinase (481 aa).

The PH domain occupies 5–108 (AIVKEGWLHK…WIQVIQHVAD (104 aa)). The segment at 120-141 (VRSGDSPSDNSGAEEMEVSHSK) is disordered. Serine 127 and serine 130 each carry an O-linked (GlcNAc) serine glycan. The 259-residue stretch at 151-409 (FEYLKLLGKG…AKEIMQHKFF (259 aa)) folds into the Protein kinase domain. Residues 157-165 (LGKGTFGKV) and lysine 180 contribute to the ATP site. The active-site Proton acceptor is aspartate 275. A glycan (O-linked (GlcNAc) threonine) is linked at threonine 306. At threonine 309 the chain carries Phosphothreonine; by PDPK1. Threonine 313 carries O-linked (GlcNAc) threonine glycosylation. Residues 410 to 481 (AGIVWQDVYE…QFSYSASGNA (72 aa)) form the AGC-kinase C-terminal domain. Serine 474 bears the Phosphoserine mark. O-linked (GlcNAc) serine; alternate glycosylation occurs at serine 474. Phosphotyrosine is present on tyrosine 475.

This sequence belongs to the protein kinase superfamily. AGC Ser/Thr protein kinase family. RAC subfamily. In terms of processing, cleavage by caspase-3/CASP3. Cleaved at the caspase-3 consensus site Asp-463 during apoptosis, resulting in down-regulation of the AKT signaling pathway and decreased cell survival. Phosphorylation on Thr-309 and Ser-474 is required for full activity. Phosphorylation of the activation loop at Thr-309 by PDPK1/PDK1 is a prerequisite for full activation. Phosphorylation by mTORC2 at Ser-474 in response to growth factors plays a key role in AKT1 activation by facilitating subsequent phosphorylation of the activation loop by PDPK1/PDK1. In terms of tissue distribution, expressed in the oocyte.

The protein resides in the cytoplasm. Its subcellular location is the nucleus. It carries out the reaction L-seryl-[protein] + ATP = O-phospho-L-seryl-[protein] + ADP + H(+). The enzyme catalyses L-threonyl-[protein] + ATP = O-phospho-L-threonyl-[protein] + ADP + H(+). Its activity is regulated as follows. Activated in response to insulin. Three specific sites, one in the kinase domain (Thr-309) and the two other ones in the C-terminal regulatory region (Ser-474 and Tyr-475), need to be phosphorylated for its full activation. Functionally, AKT1 is one of several closely related serine/threonine-protein kinases known as the AKT kinase, and which regulate many processes including metabolism, proliferation, cell survival, growth and angiogenesis. This is mediated through serine and/or threonine phosphorylation of a range of downstream substrates. Over 100 substrate candidates have been reported so far, but for most of them, no isoform specificity has been reported. Signals downstream of phosphatidylinositol 3-kinase (PI(3)K) to mediate the effects of various growth factors such as platelet-derived growth factor (PDGF), epidermal growth factor (EGF), insulin and insulin-like growth factor 1 (IGF1). Plays a role as a key modulator of the AKT-mTOR signaling pathway controlling the tempo of the process of newborn neurons integration during adult neurogenesis, including correct neuron positioning, dendritic development and synapse formation. Plays a role in glucose transport by mediating insulin-induced translocation of the GLUT4 glucose transporter to the cell surface. Mediates the antiapoptotic effects of IGF1. Mediates insulin-stimulated protein synthesis, partly by playing a role in both insulin-induced phosphorylation of 4E-BP1 and in insulin-induced activation of p70 S6 kinase. Promotes glycogen synthesis by mediating the insulin-induced activation of glycogen synthase. Required for insulin-stimulated meiotic reinitiation during oocyte maturation. May be involved in the regulation of vesicular functions such as preciliary trafficking and endocytic recycling. The protein is RAC-alpha serine/threonine-protein kinase of Xenopus laevis (African clawed frog).